The primary structure comprises 472 residues: DNA-cytosine methyltransferase (472 aa).

Residues 87–457 enclose the SAM-dependent MTase C5-type domain; the sequence is FRFIDLFAGI…KLLEPKIKQA (371 aa). Residue cysteine 177 is part of the active site.

The protein belongs to the class I-like SAM-binding methyltransferase superfamily. C5-methyltransferase family.

It carries out the reaction a 2'-deoxycytidine in DNA + S-adenosyl-L-methionine = a 5-methyl-2'-deoxycytidine in DNA + S-adenosyl-L-homocysteine + H(+). Its function is as follows. This methylase recognizes the double-stranded sequence 5'-CCWGG-3', methylates C-2 on both strands. The chain is DNA-cytosine methyltransferase (dcm) from Escherichia coli O157:H7.